The sequence spans 320 residues: Cytochrome f (320 aa).

The signal sequence occupies residues 1–35; sequence MQTRNTFSSIKEEITRSISVSLMIYIITWAPVSNA. 4 residues coordinate heme: Y36, C56, C59, and H60. The chain crosses the membrane as a helical span at residues 286–306; it reads VQGLLFFFASVILAQIFLVLK.

This sequence belongs to the cytochrome f family. In terms of assembly, the 4 large subunits of the cytochrome b6-f complex are cytochrome b6, subunit IV (17 kDa polypeptide, petD), cytochrome f and the Rieske protein, while the 4 small subunits are PetG, PetL, PetM and PetN. The complex functions as a dimer. Heme serves as cofactor.

It localises to the plastid. It is found in the chloroplast thylakoid membrane. Component of the cytochrome b6-f complex, which mediates electron transfer between photosystem II (PSII) and photosystem I (PSI), cyclic electron flow around PSI, and state transitions. In Cucumis sativus (Cucumber), this protein is Cytochrome f.